A 90-amino-acid polypeptide reads, in one-letter code: Probable Fe(2+)-trafficking protein (90 aa).

The protein belongs to the Fe(2+)-trafficking protein family.

In terms of biological role, could be a mediator in iron transactions between iron acquisition and iron-requiring processes, such as synthesis and/or repair of Fe-S clusters in biosynthetic enzymes. The polypeptide is Probable Fe(2+)-trafficking protein (Cupriavidus taiwanensis (strain DSM 17343 / BCRC 17206 / CCUG 44338 / CIP 107171 / LMG 19424 / R1) (Ralstonia taiwanensis (strain LMG 19424))).